The chain runs to 476 residues: MRQSSDNRQNLYLYNTASRTKELFSPSNDPVKLYTCGPTVYDYAHIGNFRTYIFEDLLKRILLFFGYSVKHVMNITDVDDKTLAGACKNNISLDTYTAPFIQAFFKDVATLHILPADAYPRATHYIPQMLVAIRKLLDDGIAYIGQDHSVYFSIKEFPSYGKLSQLQLQNLQCCSRIASDEYDKENLSDFVLWKAYDKHRDGHIYWESPFGKGRPGWHLECSIMAMELLGPSIDIHAGGVDNIFPHHENEIAQSESLSHQPFSRYWLHSEHLLVDGKKMSKSLGNFFTLRNLLDRGFSGAEIRYMLLQSHYRMQLNFTEEGLMACRQALKRLRDFISRLESPYPESATISEGIDQCGQRFLQDFSNAIANDLNIAAALASLFDFIHQTNSRIDQSHFTQADSHYVLDILKKINTVLGVIPFSTSLEIPSEVARLVEEREIARKEKNWKQADVLRNQIASFGYVVEDTKSGPKVKKY.

A Zn(2+)-binding site is contributed by Cys36. The 'HIGH' region signature appears at 38-48 (PTVYDYAHIGN). Cys221, His246, and Glu250 together coordinate Zn(2+). Positions 278-282 (KMSKS) match the 'KMSKS' region motif. Lys281 contributes to the ATP binding site.

The protein belongs to the class-I aminoacyl-tRNA synthetase family. Monomer. It depends on Zn(2+) as a cofactor.

It localises to the cytoplasm. It catalyses the reaction tRNA(Cys) + L-cysteine + ATP = L-cysteinyl-tRNA(Cys) + AMP + diphosphate. The protein is Cysteine--tRNA ligase of Chlamydia abortus (strain DSM 27085 / S26/3) (Chlamydophila abortus).